A 313-amino-acid chain; its full sequence is Ribosomal protein L11 methyltransferase (313 aa).

S-adenosyl-L-methionine is bound by residues Thr164, Gly185, Asp207, and Asn249.

The protein belongs to the methyltransferase superfamily. PrmA family.

The protein localises to the cytoplasm. The catalysed reaction is L-lysyl-[protein] + 3 S-adenosyl-L-methionine = N(6),N(6),N(6)-trimethyl-L-lysyl-[protein] + 3 S-adenosyl-L-homocysteine + 3 H(+). Functionally, methylates ribosomal protein L11. This chain is Ribosomal protein L11 methyltransferase, found in Clostridium botulinum (strain Alaska E43 / Type E3).